Consider the following 564-residue polypeptide: Septation ring formation regulator EzrA (564 aa).

The Extracellular segment spans residues 1–4; the sequence is MVLF. Residues 5-23 form a helical membrane-spanning segment; sequence IILAILVVILIAIGVLFYM. Over 24–564 the chain is Cytoplasmic; it reads RSNKRNLIEK…KHIEEQVIKE (541 aa). 4 coiled-coil regions span residues 84–126, 165–223, 271–303, and 350–435; these read VEEK…HQVT, EAAE…LIRE, MISRLELDEANNKLENINDKLDEMYDLIEYEVK, and VRQF…RRLL.

The protein belongs to the EzrA family.

The protein localises to the cell membrane. Functionally, negative regulator of FtsZ ring formation; modulates the frequency and position of FtsZ ring formation. Inhibits FtsZ ring formation at polar sites. Interacts either with FtsZ or with one of its binding partners to promote depolymerization. The protein is Septation ring formation regulator EzrA of Staphylococcus epidermidis (strain ATCC 12228 / FDA PCI 1200).